The sequence spans 87 residues: Large ribosomal subunit protein bL27 (87 aa).

The protein belongs to the bacterial ribosomal protein bL27 family.

The polypeptide is Large ribosomal subunit protein bL27 (Stenotrophomonas maltophilia (strain K279a)).